Consider the following 791-residue polypeptide: Cullin-2 (791 aa).

Residues 722–784 (DRKYYMECAI…KMYIQRTDQN (63 aa)) enclose the Cullin neddylation domain. K736 is covalently cross-linked (Glycyl lysine isopeptide (Lys-Gly) (interchain with G-Cter in NEDD8)).

Belongs to the cullin family. As to quaternary structure, component of multiple CBC (Cul2-ElonginB-ElonginC) E3 ubiquitin-protein ligase complexes formed of cul-2, elb-1, elc-1, rbx-1 and a variable substrate recognition component. Component of the CBC(fem-1) E3 ubiquitin-protein ligase complex with fem-1, fem-2 and fem-3. The CBC(fem-1) complex interacts with tra-1 and promotes tra-1 degradation. Probable component of the CBC(lrr-1) E3 ubiquitin-protein ligase complex incuding cul-2, elb-1, elc-1, rbx-1 and lrr-1. The CBC(lrr-1) complex interacts with the DNA replisome complex at the end of S phase; the interaction promotes the release of components of the CMG helicase complex (a component of the replisome) from chromatin. Probable component of an CBC(zif-1) E3 ubiquitin-protein ligase including cul-2, elc-1, rbx-1 and zif-1. Part of an E3 ubiquitin-protein ligase complex including cul-2, elc-1 and zyg-11. Interacts with Skp1-related protein skr-10. In terms of processing, neddylated; which enhances the ubiquitination activity of CBC (Cul2-ElonginB-ElonginC) E3 ubiquitin-protein ligase complexes. As to expression, in adults, highly expressed in meiotic cells and oocytes. In larvae, expressed in many proliferating cell types: P cells during the L1 stage; seam cells when they divide at every molt; vulval and somatic gonad cells in late L3 and L4 stages; and intestinal cells throughout larval development.

The protein resides in the cytoplasm. The protein localises to the nucleus. Its pathway is protein modification; protein ubiquitination. Core component of multiple cullin-RING-based CBC (Cul2-ElonginB-ElonginC) E3 ubiquitin-protein ligase complexes which mediate the ubiquitination and subsequent proteasomal degradation of target proteins. As a scaffold protein may contribute to catalysis through positioning of the substrate and the ubiquitin-conjugating enzyme. The functional specificity of the CBC complex depends on the variable substrate recognition component. May function in ubiquitin-mediated degradation of CKIs to target cki-1 for degradation. CBC(zif-1) may ensure germline precursor cell asymmetry by targeting germline proteins for destruction if expressed in non-germline cells. As part of the CBC(fem-1) complex directs ubiquitination of tra-1. As part of the CBC(lrr-1) complex, required for the ubiquitination and dissasembly of the CMG helicase complex from chromatin at the end of DNA replication. Positive cell-cycle regulator that is required at two distinct points in the cell cycle; the G1-to-S-phase transition and mitosis. Also required for proper cytoskeletal movement and mitotic chromosome condensation. The protein is Cullin-2 of Caenorhabditis elegans.